A 290-amino-acid chain; its full sequence is uncharacterized protein (290 aa).

Disordered stretches follow at residues Met1–Val98 and Leu209–Thr236. Over residues Lys63–Gly76 the composition is skewed to basic and acidic residues. Over residues Ala87–Arg97 the composition is skewed to low complexity. Residues Cys261–Ser281 traverse the membrane as a helical segment.

Its subcellular location is the membrane. This is an uncharacterized protein from Homo sapiens (Human).